The primary structure comprises 242 residues: Uridylate kinase (242 aa).

Residue 15–18 (KLSG) coordinates ATP. An involved in allosteric activation by GTP region spans residues 23 to 28 (GDEGFG). G57 contacts UMP. The ATP site is built by G58 and R62. UMP-binding positions include D77 and 138-145 (TGNPFCTT). ATP contacts are provided by T165, Y171, and D174.

It belongs to the UMP kinase family. In terms of assembly, homohexamer.

Its subcellular location is the cytoplasm. The catalysed reaction is UMP + ATP = UDP + ADP. It participates in pyrimidine metabolism; CTP biosynthesis via de novo pathway; UDP from UMP (UMPK route): step 1/1. Its activity is regulated as follows. Allosterically activated by GTP. Inhibited by UTP. Functionally, catalyzes the reversible phosphorylation of UMP to UDP. The protein is Uridylate kinase of Shewanella sp. (strain ANA-3).